The chain runs to 593 residues: Probable metalloendopeptidase G1-type (593 aa).

Histidine 41 serves as a coordination point for Zn(2+). Glutamate 44 is an active-site residue. A Zn(2+)-binding site is contributed by histidine 45.

It belongs to the peptidase M44 family. Zn(2+) is required as a cofactor.

Its function is as follows. Seems to be involved in viral proteins maturation by cleavage at Ala-Gly-|-Xaa motifs. In Homo sapiens (Human), this protein is Probable metalloendopeptidase G1-type.